A 471-amino-acid polypeptide reads, in one-letter code: MVSRAKVGAETTKGIDEPDRNDNTDDNGAGAVEVTEAAEDAVELTNDISTQLPQHGFLARFYTGLSRLYTGTGVFEVVGRRRLWYSVGGVIVAVAVLSIIVRGFTFGIDFKGGTTVSMPVSPGVGGTGAIEVAQVADVFKKTLGSDPESVVVVGNGASATVRISSKTLSNDQTSKLRNALFDAFGPKGADAKPSKQAISDAAVSETWGGQITKKVVIALVVFLVLVGLYITVRYERYMAISALTTMCFDLTVTAGVYSLVGFEVTPATVIGLLTILGFSLYDTVIVFDKVEENTHGFQHTTRRTFAEQANLAINQTFMRSINTSLISVLPVLALMVVAVWLLGVGTLKDLALVQLVGIIVGTYSSIFFATPLLVTLRERTELVRTHTRRVVKRRTLGSQVGKKNADSHVAAGTRKPQNQAESCADASSQEGTEVATASVPTVLSKLAPGVRPVRPTGTRRPTGKRNNVGRR.

The segment at 1 to 29 is disordered; the sequence is MVSRAKVGAETTKGIDEPDRNDNTDDNGA. A compositionally biased stretch (basic and acidic residues) spans 13–23; sequence KGIDEPDRNDN. 6 helical membrane-spanning segments follow: residues 88-108, 211-231, 242-262, 267-287, 325-345, and 355-375; these read GGVI…TFGI, ITKK…LYIT, ALTT…LVGF, ATVI…VIVF, LISV…LGVG, and LVGI…LLVT. Positions 393 to 471 are disordered; it reads RRTLGSQVGK…TGKRNNVGRR (79 aa). Positions 415 to 431 are enriched in polar residues; sequence KPQNQAESCADASSQEG. Low complexity predominate over residues 448–460; it reads PGVRPVRPTGTRR. A compositionally biased stretch (basic residues) spans 461–471; it reads PTGKRNNVGRR.

This sequence belongs to the SecD/SecF family. SecF subfamily. As to quaternary structure, forms a complex with SecD. Part of the essential Sec protein translocation apparatus which comprises SecA, SecYEG and auxiliary proteins SecDF. Other proteins may also be involved.

It is found in the cell membrane. Its function is as follows. Part of the Sec protein translocase complex. Interacts with the SecYEG preprotein conducting channel. SecDF uses the proton motive force (PMF) to complete protein translocation after the ATP-dependent function of SecA. This Mycobacterium leprae (strain TN) protein is Protein translocase subunit SecF.